A 157-amino-acid chain; its full sequence is Endoribonuclease YbeY (157 aa).

3 residues coordinate Zn(2+): histidine 114, histidine 118, and histidine 124.

It belongs to the endoribonuclease YbeY family. It depends on Zn(2+) as a cofactor.

It is found in the cytoplasm. Single strand-specific metallo-endoribonuclease involved in late-stage 70S ribosome quality control and in maturation of the 3' terminus of the 16S rRNA. This Salmonella agona (strain SL483) protein is Endoribonuclease YbeY.